The chain runs to 2291 residues: Protein Ycf2 B (2291 aa).

Glycine 1642–serine 1649 is a binding site for ATP.

This sequence belongs to the Ycf2 family.

Its subcellular location is the plastid. It localises to the chloroplast stroma. Its function is as follows. Probable ATPase of unknown function. Its presence in a non-photosynthetic plant (Epifagus virginiana) and experiments in tobacco indicate that it has an essential function which is probably not related to photosynthesis. This is Protein Ycf2 B (ycf2-B) from Atropa belladonna (Belladonna).